The sequence spans 793 residues: Protein translocase subunit SecA 2 (793 aa).

ATP contacts are provided by residues Q77, G95–T99, and D493.

It belongs to the SecA family. Monomer and homodimer (Potential). Part of the accessory SecA2/SecY2 protein translocation apparatus required to export cell wall protein GspB.

Its subcellular location is the cell membrane. The protein localises to the cytoplasm. The enzyme catalyses ATP + H2O + cellular proteinSide 1 = ADP + phosphate + cellular proteinSide 2.. Part of the accessory SecA2/SecY2 system specifically required to export GspB, a serine-rich repeat cell wall protein encoded upstream in the same operon. The chain is Protein translocase subunit SecA 2 from Streptococcus gordonii.